A 314-amino-acid polypeptide reads, in one-letter code: Small ribosomal subunit biogenesis GTPase RsgA (314 aa).

Residues 1–21 form a disordered region; the sequence is MKRAPTKQPAKPAARGGERAQ. Residues 85–246 enclose the CP-type G domain; sequence SDQFKSKLFA…LIDSPGFQEF (162 aa). GTP-binding positions include 134-137 and 188-196; these read NKID and GQSGMGKST. Positions 270, 275, 277, and 283 each coordinate Zn(2+).

The protein belongs to the TRAFAC class YlqF/YawG GTPase family. RsgA subfamily. In terms of assembly, monomer. Associates with 30S ribosomal subunit, binds 16S rRNA. Zn(2+) is required as a cofactor.

Its subcellular location is the cytoplasm. One of several proteins that assist in the late maturation steps of the functional core of the 30S ribosomal subunit. Helps release RbfA from mature subunits. May play a role in the assembly of ribosomal proteins into the subunit. Circularly permuted GTPase that catalyzes slow GTP hydrolysis, GTPase activity is stimulated by the 30S ribosomal subunit. This chain is Small ribosomal subunit biogenesis GTPase RsgA, found in Burkholderia pseudomallei (strain 1710b).